A 290-amino-acid polypeptide reads, in one-letter code: Appressoria-specific virulence factor GAS2 (290 aa).

Residues 1 to 19 (MKYTSAILISAFAATNVFA) form the signal peptide. N99 carries an N-linked (GlcNAc...) asparagine glycan. The interval 121-140 (LPRAGGGTSTPKGTEETGVK) is disordered.

It localises to the cytoplasm. Its function is as follows. Appressoria-specific virulence factor required for appressorial penetration in host and lesion development. The sequence is that of Appressoria-specific virulence factor GAS2 from Pyricularia oryzae (strain 70-15 / ATCC MYA-4617 / FGSC 8958) (Rice blast fungus).